Here is a 434-residue protein sequence, read N- to C-terminus: Histidine--tRNA ligase (434 aa).

The protein belongs to the class-II aminoacyl-tRNA synthetase family. In terms of assembly, homodimer.

The protein resides in the cytoplasm. The enzyme catalyses tRNA(His) + L-histidine + ATP = L-histidyl-tRNA(His) + AMP + diphosphate + H(+). The chain is Histidine--tRNA ligase from Chlorobium phaeobacteroides (strain BS1).